The chain runs to 282 residues: Ammonia transport outward protein 2 (282 aa).

The segment at 1 to 34 (MSDREQSSGNTAFENPKALDSSEGEFISENNDQS) is disordered. Ser-2 carries the post-translational modification N-acetylserine. Phosphoserine occurs at positions 2, 7, 21, 22, 28, and 40. The Extracellular portion of the chain corresponds to 2–86 (SDREQSSGNT…GLAPAPVHKF (85 aa)). A helical membrane pass occupies residues 87–107 (ANPAPLGLSGFALTTFVLSMF). Residues 108-119 (NARAQGITIPNV) are Cytoplasmic-facing. Residues 120–140 (VVGCAMFYGGLVQLIAGIWEI) traverse the membrane as a helical segment. The Extracellular portion of the chain corresponds to 141–150 (ALENTFGGTA). Residues 151-171 (LCSFGGFWLSFGAIYIPWFGI) traverse the membrane as a helical segment. The Cytoplasmic segment spans residues 172–184 (LDAYKDKESDLGN). A helical membrane pass occupies residues 185-205 (ALGFYLLGWALFTFGLSVCTM). Topologically, residues 206-207 (KS) are extracellular. The helical transmembrane segment at 208-228 (TIMFFALFFLLAVTFLLLSIA) threads the bilayer. Over 229–238 (NFTGEVGVTR) the chain is Cytoplasmic. Residues 239 to 259 (AGGVLGVIVAFIAWYNAYAGI) traverse the membrane as a helical segment. Topologically, residues 260 to 282 (ATRQNSYIMVHPFALPSNDKVFF) are extracellular.

It belongs to the acetate uptake transporter (AceTr) (TC 2.A.96) family.

It is found in the cell membrane. In terms of biological role, transporter protein required for ammonia export. Involved in acetate resistance. This chain is Ammonia transport outward protein 2 (ATO2), found in Saccharomyces cerevisiae (strain ATCC 204508 / S288c) (Baker's yeast).